The chain runs to 178 residues: Large ribosomal subunit protein uL6 (178 aa).

Belongs to the universal ribosomal protein uL6 family. As to quaternary structure, part of the 50S ribosomal subunit.

Functionally, this protein binds to the 23S rRNA, and is important in its secondary structure. It is located near the subunit interface in the base of the L7/L12 stalk, and near the tRNA binding site of the peptidyltransferase center. This is Large ribosomal subunit protein uL6 from Leuconostoc mesenteroides subsp. mesenteroides (strain ATCC 8293 / DSM 20343 / BCRC 11652 / CCM 1803 / JCM 6124 / NCDO 523 / NBRC 100496 / NCIMB 8023 / NCTC 12954 / NRRL B-1118 / 37Y).